Consider the following 745-residue polypeptide: Jacalin-related lectin 4 (745 aa).

5 Jacalin-type lectin domains span residues 2-148 (AQKL…YFAP), 151-294 (PTKF…YFSP), 307-448 (AEKL…YFVT), 451-594 (PTKF…YFSR), and 601-744 (AETL…YVMP).

It belongs to the jacalin lectin family.

The chain is Jacalin-related lectin 4 (JAL4) from Arabidopsis thaliana (Mouse-ear cress).